The chain runs to 413 residues: Tryptophan synthase beta chain (413 aa).

Residue Lys106 is modified to N6-(pyridoxal phosphate)lysine.

Belongs to the TrpB family. Tetramer of two alpha and two beta chains. The cofactor is pyridoxal 5'-phosphate.

It catalyses the reaction (1S,2R)-1-C-(indol-3-yl)glycerol 3-phosphate + L-serine = D-glyceraldehyde 3-phosphate + L-tryptophan + H2O. The protein operates within amino-acid biosynthesis; L-tryptophan biosynthesis; L-tryptophan from chorismate: step 5/5. In terms of biological role, the beta subunit is responsible for the synthesis of L-tryptophan from indole and L-serine. The protein is Tryptophan synthase beta chain of Methylorubrum populi (strain ATCC BAA-705 / NCIMB 13946 / BJ001) (Methylobacterium populi).